The chain runs to 295 residues: Tyrosine recombinase XerC (295 aa).

Residues 1 to 85 (MHILLQKYYN…ALRQFLNYLV (85 aa)) form the Core-binding (CB) domain. The Tyr recombinase domain occupies 106–285 (YLPKNMDMEQ…DFQHLAQVYD (180 aa)). Residues arginine 145, lysine 169, histidine 237, arginine 240, and histidine 263 contribute to the active site. The active-site O-(3'-phospho-DNA)-tyrosine intermediate is tyrosine 272.

The protein belongs to the 'phage' integrase family. XerC subfamily. Forms a cyclic heterotetrameric complex composed of two molecules of XerC and two molecules of XerD.

It is found in the cytoplasm. Site-specific tyrosine recombinase, which acts by catalyzing the cutting and rejoining of the recombining DNA molecules. The XerC-XerD complex is essential to convert dimers of the bacterial chromosome into monomers to permit their segregation at cell division. It also contributes to the segregational stability of plasmids. This is Tyrosine recombinase XerC from Histophilus somni (strain 2336) (Haemophilus somnus).